The sequence spans 302 residues: Oxygen-dependent coproporphyrinogen-III oxidase (302 aa).

Substrate is bound at residue serine 94. A divalent metal cation-binding residues include histidine 98 and histidine 108. Catalysis depends on histidine 108, which acts as the Proton donor. Substrate is bound at residue 110-112 (NVR). The a divalent metal cation site is built by histidine 147 and histidine 177. Residues 242-277 (YVEFNLVYDRGTLFGLQTGGRTESILMSMPPLVRWQ) form an important for dimerization region. Residue 260-262 (GGR) participates in substrate binding.

It belongs to the aerobic coproporphyrinogen-III oxidase family. In terms of assembly, homodimer. Requires a divalent metal cation as cofactor.

The protein localises to the cytoplasm. The catalysed reaction is coproporphyrinogen III + O2 + 2 H(+) = protoporphyrinogen IX + 2 CO2 + 2 H2O. Its pathway is porphyrin-containing compound metabolism; protoporphyrin-IX biosynthesis; protoporphyrinogen-IX from coproporphyrinogen-III (O2 route): step 1/1. Involved in the heme biosynthesis. Catalyzes the aerobic oxidative decarboxylation of propionate groups of rings A and B of coproporphyrinogen-III to yield the vinyl groups in protoporphyrinogen-IX. In Shewanella putrefaciens (strain CN-32 / ATCC BAA-453), this protein is Oxygen-dependent coproporphyrinogen-III oxidase.